The following is a 230-amino-acid chain: tRNA (guanine-N(1)-)-methyltransferase (230 aa).

S-adenosyl-L-methionine contacts are provided by residues Gly-114 and 138-143; that span reads IGDYVL.

Belongs to the RNA methyltransferase TrmD family. Homodimer.

The protein resides in the cytoplasm. It catalyses the reaction guanosine(37) in tRNA + S-adenosyl-L-methionine = N(1)-methylguanosine(37) in tRNA + S-adenosyl-L-homocysteine + H(+). In terms of biological role, specifically methylates guanosine-37 in various tRNAs. The sequence is that of tRNA (guanine-N(1)-)-methyltransferase from Rhodococcus jostii (strain RHA1).